The following is a 481-amino-acid chain: Cobyric acid synthase (481 aa).

Residues 248–435 (NTVIAVPMLP…LHGLFHGGAF (188 aa)) enclose the GATase cobBQ-type domain. C329 serves as the catalytic Nucleophile. H427 is a catalytic residue.

This sequence belongs to the CobB/CobQ family. CobQ subfamily.

Its pathway is cofactor biosynthesis; adenosylcobalamin biosynthesis. In terms of biological role, catalyzes amidations at positions B, D, E, and G on adenosylcobyrinic A,C-diamide. NH(2) groups are provided by glutamine, and one molecule of ATP is hydrogenolyzed for each amidation. This is Cobyric acid synthase from Granulibacter bethesdensis (strain ATCC BAA-1260 / CGDNIH1).